A 697-amino-acid polypeptide reads, in one-letter code: Potassium-transporting ATPase ATP-binding subunit (697 aa).

The next 4 helical transmembrane spans lie at 55-75 (PIMF…FLPS), 82-102 (GWFN…ANFA), 245-265 (LTFI…YLGF), and 271-291 (VLVA…LSAI). The active-site 4-aspartylphosphate intermediate is D324. ATP contacts are provided by residues D361, E365, 393-400 (FKAETRMS), and K412. Mg(2+) is bound by residues D535 and D539. Transmembrane regions (helical) follow at residues 605-625 (FAII…LNIM), 633-653 (AILS…PLAM), and 677-697 (GGVI…GLFI).

Belongs to the cation transport ATPase (P-type) (TC 3.A.3) family. Type IA subfamily. As to quaternary structure, the system is composed of three essential subunits: KdpA, KdpB and KdpC.

Its subcellular location is the cell membrane. The catalysed reaction is K(+)(out) + ATP + H2O = K(+)(in) + ADP + phosphate + H(+). Functionally, part of the high-affinity ATP-driven potassium transport (or Kdp) system, which catalyzes the hydrolysis of ATP coupled with the electrogenic transport of potassium into the cytoplasm. This subunit is responsible for energy coupling to the transport system and for the release of the potassium ions to the cytoplasm. This chain is Potassium-transporting ATPase ATP-binding subunit, found in Bacillus cereus (strain AH187).